Here is a 241-residue protein sequence, read N- to C-terminus: UPF0280 protein MK0206 (241 aa).

It belongs to the UPF0280 family.

The chain is UPF0280 protein MK0206 from Methanopyrus kandleri (strain AV19 / DSM 6324 / JCM 9639 / NBRC 100938).